Consider the following 252-residue polypeptide: 3-dehydroquinate dehydratase (252 aa).

Residues Ser-21, 46-48 (EWR), and Arg-82 contribute to the 3-dehydroquinate site. Residue His-143 is the Proton donor/acceptor of the active site. Residue Lys-170 is the Schiff-base intermediate with substrate of the active site. Positions 213, 232, and 236 each coordinate 3-dehydroquinate.

Belongs to the type-I 3-dehydroquinase family. As to quaternary structure, homodimer.

It catalyses the reaction 3-dehydroquinate = 3-dehydroshikimate + H2O. It participates in metabolic intermediate biosynthesis; chorismate biosynthesis; chorismate from D-erythrose 4-phosphate and phosphoenolpyruvate: step 3/7. Its function is as follows. Involved in the third step of the chorismate pathway, which leads to the biosynthesis of aromatic amino acids. Catalyzes the cis-dehydration of 3-dehydroquinate (DHQ) and introduces the first double bond of the aromatic ring to yield 3-dehydroshikimate. The polypeptide is 3-dehydroquinate dehydratase (Shigella dysenteriae).